We begin with the raw amino-acid sequence, 281 residues long: Acetyl-coenzyme A carboxylase carboxyl transferase subunit beta 2 (281 aa).

Residues 26 to 281 (LLTRCPVCHE…TITQGGHQDV (256 aa)) form the CoA carboxyltransferase N-terminal domain. Residues cysteine 30, cysteine 33, cysteine 48, and cysteine 51 each contribute to the Zn(2+) site. The C4-type zinc finger occupies 30-51 (CPVCHEDCYTQDLGEFKVCPHC).

This sequence belongs to the AccD/PCCB family. As to quaternary structure, acetyl-CoA carboxylase is a heterohexamer composed of biotin carboxyl carrier protein (AccB), biotin carboxylase (AccC) and two subunits each of ACCase subunit alpha (AccA) and ACCase subunit beta (AccD). Requires Zn(2+) as cofactor.

Its subcellular location is the cytoplasm. The enzyme catalyses N(6)-carboxybiotinyl-L-lysyl-[protein] + acetyl-CoA = N(6)-biotinyl-L-lysyl-[protein] + malonyl-CoA. Its pathway is lipid metabolism; malonyl-CoA biosynthesis; malonyl-CoA from acetyl-CoA: step 1/1. Component of the acetyl coenzyme A carboxylase (ACC) complex. Biotin carboxylase (BC) catalyzes the carboxylation of biotin on its carrier protein (BCCP) and then the CO(2) group is transferred by the transcarboxylase to acetyl-CoA to form malonyl-CoA. This is Acetyl-coenzyme A carboxylase carboxyl transferase subunit beta 2 from Lactiplantibacillus plantarum (strain JDM1) (Lactobacillus plantarum).